A 108-amino-acid polypeptide reads, in one-letter code: UPF0060 membrane protein Ent638_1931 (108 aa).

Transmembrane regions (helical) follow at residues 6-26 (LLFFATALCEIIGCFLPWLWL), 29-49 (GASVFLLLPAGIALALFVWLL), 61-81 (AAYGGVYVCTALLWLRVVDGV), and 85-105 (AYDWAGALVALCGMLIIVAGW).

The protein belongs to the UPF0060 family.

The protein localises to the cell inner membrane. This chain is UPF0060 membrane protein Ent638_1931, found in Enterobacter sp. (strain 638).